A 252-amino-acid chain; its full sequence is MVSWIISRLVVLIFGTLYPAYSSYKAVKTKNVKEYVKWMMYWIVFAFFTTAETLTDIVLSWFPFYFELKIAFVIWLLSPYTKGSSVLYRKFVHPTLSNKEKEIDEYITQARDKSYETMMRVGKRGLNLAANAAVTAAAKGVLSEKLRSFSMQDLTLIRDEDALPLQRPDGRLRPSPGSLLDTIEDLGDDPALSLRSSTNPADSRTEASEDDMGDKAPKRAKPIKKAPKAEPLASKTLKTRPKKKTSGGGDSA.

2 consecutive transmembrane segments (helical) span residues 1–21 (MVSW…YPAY) and 35–55 (YVKW…ETLT). Residue S150 is modified to Phosphoserine. The disordered stretch occupies residues 165-252 (LQRPDGRLRP…KKTSGGGDSA (88 aa)). The span at 203-217 (SRTEASEDDMGDKAP) shows a compositional bias: basic and acidic residues.

This sequence belongs to the DP1 family. In terms of assembly, interacts with odorant receptor proteins. In terms of tissue distribution, detected in brain, heart and skeletal muscle, and at low levels in placenta, kidney and pancreas. Expressed in circumvallate papillae.

It is found in the membrane. Functionally, required for endoplasmic reticulum (ER) network formation, shaping and remodeling. May enhance the cell surface expression of odorant receptors. This chain is Receptor expression-enhancing protein 2 (REEP2), found in Homo sapiens (Human).